Consider the following 422-residue polypeptide: Probable protein phosphatase 2C 43 (422 aa).

The PPM-type phosphatase domain occupies 117 to 393; that stretch reads SSGSYADKGD…DNVTVVVICF (277 aa). Asp163, Gly164, Asp341, and Asp384 together coordinate Mn(2+).

Belongs to the PP2C family. The cofactor is Mg(2+). Mn(2+) is required as a cofactor.

It catalyses the reaction O-phospho-L-seryl-[protein] + H2O = L-seryl-[protein] + phosphate. The catalysed reaction is O-phospho-L-threonyl-[protein] + H2O = L-threonyl-[protein] + phosphate. The protein is Probable protein phosphatase 2C 43 of Arabidopsis thaliana (Mouse-ear cress).